The sequence spans 432 residues: Adenylosuccinate synthetase (432 aa).

Residues 12 to 18 and 40 to 42 contribute to the GTP site; these read GDEGKGK and GHT. Residue Asp13 is the Proton acceptor of the active site. 2 residues coordinate Mg(2+): Asp13 and Gly40. Residues 13–16, 38–41, Thr128, Arg142, Gln223, Thr238, and Arg302 contribute to the IMP site; these read DEGK and NAGH. His41 serves as the catalytic Proton donor. 298–304 lines the substrate pocket; sequence TTTGRPR. GTP-binding positions include Arg304, 330 to 332, and 417 to 419; these read HLD and GVG.

Belongs to the adenylosuccinate synthetase family. Homodimer. Mg(2+) serves as cofactor.

It localises to the cytoplasm. It carries out the reaction IMP + L-aspartate + GTP = N(6)-(1,2-dicarboxyethyl)-AMP + GDP + phosphate + 2 H(+). It participates in purine metabolism; AMP biosynthesis via de novo pathway; AMP from IMP: step 1/2. In terms of biological role, plays an important role in the de novo pathway of purine nucleotide biosynthesis. Catalyzes the first committed step in the biosynthesis of AMP from IMP. In Symbiobacterium thermophilum (strain DSM 24528 / JCM 14929 / IAM 14863 / T), this protein is Adenylosuccinate synthetase.